Reading from the N-terminus, the 299-residue chain is Very long chain fatty acid elongase 5 (299 aa).

An N-acetylmethionine modification is found at Met-1. Transmembrane regions (helical) follow at residues 26–46 (WFLL…LLIV), 64–84 (ILVV…YELV), 112–132 (VLWW…FFIL), 139–158 (ITVL…WFVM), 168–187 (FGAT…YGLS), 205–225 (GQLV…IWPC), and 227–247 (FPLG…ALFT).

This sequence belongs to the ELO family. ELOVL5 subfamily. As to quaternary structure, interacts with TECR. As to expression, highly expressed in lung and brain.

It localises to the endoplasmic reticulum membrane. The protein resides in the cell projection. Its subcellular location is the dendrite. It carries out the reaction a very-long-chain acyl-CoA + malonyl-CoA + H(+) = a very-long-chain 3-oxoacyl-CoA + CO2 + CoA. The catalysed reaction is (6Z,9Z,12Z,15Z)-octadecatetraenoyl-CoA + malonyl-CoA + H(+) = (8Z,11Z,14Z,17Z)-3-oxoicosatetraenoyl-CoA + CO2 + CoA. The enzyme catalyses (6Z,9Z,12Z)-octadecatrienoyl-CoA + malonyl-CoA + H(+) = (8Z,11Z,14Z)-3-oxoeicosatrienoyl-CoA + CO2 + CoA. It catalyses the reaction (5Z,8Z,11Z,14Z,17Z)-eicosapentaenoyl-CoA + malonyl-CoA + H(+) = 3-oxo-(7Z,10Z,13Z,16Z,19Z)-docosapentaenoyl-CoA + CO2 + CoA. It carries out the reaction (5Z,8Z,11Z,14Z)-eicosatetraenoyl-CoA + malonyl-CoA + H(+) = (7Z,10Z,13Z,16Z)-3-oxodocosatetraenoyl-CoA + CO2 + CoA. The catalysed reaction is (9Z,12Z,15Z)-octadecatrienoyl-CoA + malonyl-CoA + H(+) = (11Z,14Z,17Z)-3-oxoeicosatrienoyl-CoA + CO2 + CoA. The enzyme catalyses (9Z)-hexadecenoyl-CoA + malonyl-CoA + H(+) = 3-oxo-(11Z)-octadecenoyl-CoA + CO2 + CoA. It catalyses the reaction (9Z)-octadecenoyl-CoA + malonyl-CoA + H(+) = 3-oxo-(11Z)-eicosenoyl-CoA + CO2 + CoA. It carries out the reaction (11Z)-octadecenoyl-CoA + malonyl-CoA + H(+) = 3-oxo-(13Z)-eicosenoyl-CoA + CO2 + CoA. The catalysed reaction is (9Z,12Z)-octadecadienoyl-CoA + malonyl-CoA + H(+) = (11Z,14Z)-3-oxoicosa-11,14-dienoyl-CoA + CO2 + CoA. The protein operates within lipid metabolism; polyunsaturated fatty acid biosynthesis. Catalyzes the first and rate-limiting reaction of the four reactions that constitute the long-chain fatty acids elongation cycle. This endoplasmic reticulum-bound enzymatic process allows the addition of 2 carbons to the chain of long- and very long-chain fatty acids (VLCFAs) per cycle. Condensing enzyme that acts specifically toward polyunsaturated acyl-CoA with the higher activity toward C18:3(n-6) acyl-CoA. May participate in the production of monounsaturated and of polyunsaturated VLCFAs of different chain lengths that are involved in multiple biological processes as precursors of membrane lipids and lipid mediators. In conditions where the essential linoleic and alpha linoleic fatty acids are lacking it is also involved in the synthesis of Mead acid from oleic acid. The polypeptide is Very long chain fatty acid elongase 5 (Rattus norvegicus (Rat)).